We begin with the raw amino-acid sequence, 193 residues long: dCTP deaminase (193 aa).

Residues 110–115 (RSSLAR), D128, 136–138 (VLE), Y171, K178, and Q182 contribute to the dCTP site. The Proton donor/acceptor role is filled by E138. Residues 169 to 193 (RPYNSRQDAKYKGQQGAVASRIDKD) form a disordered region.

The protein belongs to the dCTP deaminase family. As to quaternary structure, homotrimer.

The enzyme catalyses dCTP + H2O + H(+) = dUTP + NH4(+). The protein operates within pyrimidine metabolism; dUMP biosynthesis; dUMP from dCTP (dUTP route): step 1/2. Catalyzes the deamination of dCTP to dUTP. In Erwinia tasmaniensis (strain DSM 17950 / CFBP 7177 / CIP 109463 / NCPPB 4357 / Et1/99), this protein is dCTP deaminase.